The following is a 386-amino-acid chain: Lipoyl synthase, mitochondrial (386 aa).

[4Fe-4S] cluster contacts are provided by Cys-115, Cys-120, Cys-126, Cys-146, Cys-150, Cys-153, and Ser-362. Positions 131 to 351 (ETGTATATIM…QKLGMEMGFR (221 aa)) constitute a Radical SAM core domain.

It belongs to the radical SAM superfamily. Lipoyl synthase family. Requires [4Fe-4S] cluster as cofactor.

Its subcellular location is the mitochondrion. The catalysed reaction is [[Fe-S] cluster scaffold protein carrying a second [4Fe-4S](2+) cluster] + N(6)-octanoyl-L-lysyl-[protein] + 2 oxidized [2Fe-2S]-[ferredoxin] + 2 S-adenosyl-L-methionine + 4 H(+) = [[Fe-S] cluster scaffold protein] + N(6)-[(R)-dihydrolipoyl]-L-lysyl-[protein] + 4 Fe(3+) + 2 hydrogen sulfide + 2 5'-deoxyadenosine + 2 L-methionine + 2 reduced [2Fe-2S]-[ferredoxin]. It participates in protein modification; protein lipoylation via endogenous pathway; protein N(6)-(lipoyl)lysine from octanoyl-[acyl-carrier-protein]: step 2/2. In terms of biological role, catalyzes the radical-mediated insertion of two sulfur atoms into the C-6 and C-8 positions of the octanoyl moiety bound to the lipoyl domains of lipoate-dependent enzymes, thereby converting the octanoylated domains into lipoylated derivatives. The protein is Lipoyl synthase, mitochondrial of Picea sitchensis (Sitka spruce).